The sequence spans 639 residues: Threonine--tRNA ligase (639 aa).

The 61-residue stretch at 1 to 61 (MIKVALKDGS…DTDCDLNLFK (61 aa)) folds into the TGS domain. Residues 242–532 (DHRKLGKELG…LIEHYAGKFP (291 aa)) are catalytic. Cysteine 333, histidine 384, and histidine 509 together coordinate Zn(2+).

The protein belongs to the class-II aminoacyl-tRNA synthetase family. As to quaternary structure, homodimer. The cofactor is Zn(2+).

Its subcellular location is the cytoplasm. It carries out the reaction tRNA(Thr) + L-threonine + ATP = L-threonyl-tRNA(Thr) + AMP + diphosphate + H(+). Catalyzes the attachment of threonine to tRNA(Thr) in a two-step reaction: L-threonine is first activated by ATP to form Thr-AMP and then transferred to the acceptor end of tRNA(Thr). Also edits incorrectly charged L-seryl-tRNA(Thr). The polypeptide is Threonine--tRNA ligase (Clostridioides difficile (strain 630) (Peptoclostridium difficile)).